Reading from the N-terminus, the 436-residue chain is Ribosomal protein uS12 methylthiotransferase RimO (436 aa).

Residues 4-122 (KRIDIITLGC…LLQDLGKTYH (119 aa)) enclose the MTTase N-terminal domain. The [4Fe-4S] cluster site is built by cysteine 13, cysteine 51, cysteine 85, cysteine 146, cysteine 150, and cysteine 153. The 232-residue stretch at 132 to 363 (TTPKHYAYLK…MDIQQGISAE (232 aa)) folds into the Radical SAM core domain. In terms of domain architecture, TRAM spans 366-433 (AAKIGQQMKV…DFDLYAKILN (68 aa)).

Belongs to the methylthiotransferase family. RimO subfamily. [4Fe-4S] cluster serves as cofactor.

Its subcellular location is the cytoplasm. It carries out the reaction L-aspartate(89)-[ribosomal protein uS12]-hydrogen + (sulfur carrier)-SH + AH2 + 2 S-adenosyl-L-methionine = 3-methylsulfanyl-L-aspartate(89)-[ribosomal protein uS12]-hydrogen + (sulfur carrier)-H + 5'-deoxyadenosine + L-methionine + A + S-adenosyl-L-homocysteine + 2 H(+). Functionally, catalyzes the methylthiolation of an aspartic acid residue of ribosomal protein uS12. The chain is Ribosomal protein uS12 methylthiotransferase RimO from Bacteroides thetaiotaomicron (strain ATCC 29148 / DSM 2079 / JCM 5827 / CCUG 10774 / NCTC 10582 / VPI-5482 / E50).